The following is a 564-amino-acid chain: Keratin, type II cytoskeletal 6B (564 aa).

The segment covering 1–11 (MASTSTTIRSH) has biased composition (low complexity). Positions 1–23 (MASTSTTIRSHSSSRRGFSANSA) are disordered. N-acetylalanine is present on Ala-2. The head stretch occupies residues 2-162 (ASTSTTIRSH…DPAIQRVRAE (161 aa)). The coil 1A stretch occupies residues 163–198 (EREQIKTLNNKFASFIDKVRFLEQQNKVLDTKWTLL). In terms of domain architecture, IF rod spans 163–476 (EREQIKTLNN…KLLEGEECRL (314 aa)). The linker 1 stretch occupies residues 199–217 (QEQGTKTVRQNLEPLFEQY). A coil 1B region spans residues 218 to 309 (INNLRRQLDN…ALYDAELSQM (92 aa)). The tract at residues 310-333 (QTHISDTSVVLSMDNNRNLDLDSI) is linker 12. Residues 334–472 (IAEVKAQYEE…ATYRKLLEGE (139 aa)) are coil 2. The tract at residues 473–564 (ECRLNGEGVG…SSSSRKSYKH (92 aa)) is tail. A disordered region spans residues 533–564 (RATGGGLSSVGGGSSTIKYTTTSSSSRKSYKH). Over residues 534–546 (ATGGGLSSVGGGS) the composition is skewed to gly residues. The span at 547 to 564 (STIKYTTTSSSSRKSYKH) shows a compositional bias: low complexity.

It belongs to the intermediate filament family. Heterodimer of a type I and a type II keratin. KRT6 isomers associate with KRT16 and/or KRT17. In terms of tissue distribution, constitutively expressed in distinct types of epithelia such as those in oral mucosa, esophagus, papillae of tongue and hair follicle outer root sheath.

This Homo sapiens (Human) protein is Keratin, type II cytoskeletal 6B (KRT6B).